We begin with the raw amino-acid sequence, 90 residues long: Small ribosomal subunit protein bS16 (90 aa).

The protein belongs to the bacterial ribosomal protein bS16 family. In terms of assembly, part of the 30S ribosomal subunit.

The chain is Small ribosomal subunit protein bS16 from Bacillus subtilis (strain 168).